A 465-amino-acid polypeptide reads, in one-letter code: Cysteine--tRNA ligase (465 aa).

Position 30 (Cys30) interacts with Zn(2+). The short motif at 32 to 42 (ITVYDYCHVGH) is the 'HIGH' region element. Positions 214, 239, and 243 each coordinate Zn(2+). A 'KMSKS' region motif is present at residues 271 to 275 (KMSKS). Lys274 contributes to the ATP binding site.

It belongs to the class-I aminoacyl-tRNA synthetase family. Monomer. Zn(2+) is required as a cofactor.

It localises to the cytoplasm. It catalyses the reaction tRNA(Cys) + L-cysteine + ATP = L-cysteinyl-tRNA(Cys) + AMP + diphosphate. The chain is Cysteine--tRNA ligase from Burkholderia ambifaria (strain ATCC BAA-244 / DSM 16087 / CCUG 44356 / LMG 19182 / AMMD) (Burkholderia cepacia (strain AMMD)).